Here is a 305-residue protein sequence, read N- to C-terminus: Glycine--tRNA ligase alpha subunit (305 aa).

This sequence belongs to the class-II aminoacyl-tRNA synthetase family. As to quaternary structure, tetramer of two alpha and two beta subunits.

The protein resides in the cytoplasm. It carries out the reaction tRNA(Gly) + glycine + ATP = glycyl-tRNA(Gly) + AMP + diphosphate. The chain is Glycine--tRNA ligase alpha subunit (glyQ) from Vibrio cholerae serotype O1 (strain ATCC 39315 / El Tor Inaba N16961).